The primary structure comprises 664 residues: Intraflagellar transport protein 70B (664 aa).

TPR repeat units lie at residues 11-44 (DGEF…SPRS), 45-78 (RAGL…HPEL), 153-186 (YDGQ…SGYQ), 188-220 (DISY…GIRQ), 385-418 (LTEQ…YDET), 423-456 (IPVL…CNDH), and 458-491 (VWKL…NYDN). Positions 507–534 (YIMTSQNEEAEELMRKIEKEEEQLSYDD) form a coiled coil. One copy of the TPR 8 repeat lies at 543–576 (CIVNLVIGTLYCAKGNYDFGISRVIKSLEPYHKK).

This sequence belongs to the TTC30/dfy-1/fleer family. In terms of assembly, interacts with the IFT B complex components IFT27, IFT46, IFT74, IFT52, IFT57, IFT80, IFT81 and IFT88. Interacts with KIF17.

The protein localises to the cell projection. The protein resides in the cilium. Its function is as follows. Required for polyglutamylation of axonemal tubulin. Plays a role in anterograde intraflagellar transport (IFT), the process by which cilia precursors are transported from the base of the cilium to the site of their incorporation at the tip. The chain is Intraflagellar transport protein 70B (Ift70b) from Rattus norvegicus (Rat).